Here is a 189-residue protein sequence, read N- to C-terminus: uncharacterized protein (189 aa).

Residues 9 to 69 (ADTGGRILRA…SMLTSHIADV (61 aa)) form the HTH tetR-type domain. Positions 32–51 (TLAEIARRAGVSRPTVYRRW) form a DNA-binding region, H-T-H motif.

This is an uncharacterized protein from Mycobacterium tuberculosis (strain CDC 1551 / Oshkosh).